Here is a 77-residue protein sequence, read N- to C-terminus: Protein AC43 (77 aa).

Its function is as follows. Plays a role in the production of occlusion bodies as well as expression of the polyhedrin gene. This Autographa californica nuclear polyhedrosis virus (AcMNPV) protein is Protein AC43.